We begin with the raw amino-acid sequence, 288 residues long: DegV domain-containing protein DR_1903 (288 aa).

A DegV domain is found at 2–280; the sequence is IAVTTESTAD…PGVVAVLAFP (279 aa). Positions 59 and 93 each coordinate hexadecanoate.

May bind long-chain fatty acids, such as palmitate, and may play a role in lipid transport or fatty acid metabolism. In Deinococcus radiodurans (strain ATCC 13939 / DSM 20539 / JCM 16871 / CCUG 27074 / LMG 4051 / NBRC 15346 / NCIMB 9279 / VKM B-1422 / R1), this protein is DegV domain-containing protein DR_1903.